Consider the following 287-residue polypeptide: tRNA N(3)-cytidine methyltransferase METTL6 (287 aa).

S-adenosyl-L-methionine contacts are provided by W45, Y49, G87, D110, D136, L137, and I157. The disordered stretch occupies residues 267–287 (RKPPKDPAPTTDSASLLRKEF).

This sequence belongs to the methyltransferase superfamily. METL family. As to quaternary structure, monomer. Interacts with SARS1/SerRS; interaction is mediated via tRNA(Ser) and is required for N(3)-methylcytidine methylation.

The protein resides in the cytoplasm. It localises to the nucleus. The enzyme catalyses cytidine(32) in tRNA(Ser) + S-adenosyl-L-methionine = N(3)-methylcytidine(32) in tRNA(Ser) + S-adenosyl-L-homocysteine + H(+). In terms of biological role, S-adenosyl-L-methionine-dependent methyltransferase that mediates N(3)-methylcytidine modification of residue 32 of the tRNA anticodon loop of tRNA(Ser), including tRNA(Ser)(UGA) and tRNA(Ser)(GCU). Interaction with SARS1/SerRS is required for N(3)-methylcytidine methylation. The polypeptide is tRNA N(3)-cytidine methyltransferase METTL6 (Mettl6) (Rattus norvegicus (Rat)).